The primary structure comprises 117 residues: Immunoglobulin heavy variable 1-84 (117 aa).

The signal sequence occupies residues methionine 1–cysteine 19. The segment at glutamine 20 to threonine 49 is framework-1. An Ig-like domain is found at valine 31–arginine 117. A disulfide bridge connects residues cysteine 41 and cysteine 115. Residues aspartate 50–asparagine 54 are complementarity-determining-1. The tract at residues tryptophan 55 to glycine 68 is framework-2. Residues tryptophan 69–glycine 85 are complementarity-determining-2. Residues lysine 86–arginine 117 are framework-3.

This Mus musculus (Mouse) protein is Immunoglobulin heavy variable 1-84.